The following is a 276-amino-acid chain: uncharacterized protein (276 aa).

The signal sequence occupies residues 1–25; the sequence is MNKKRLLPKASLGALFMLFGTALTA. Residue Cys26 is the site of N-palmitoyl cysteine attachment. Residue Cys26 is the site of S-diacylglycerol cysteine attachment.

It belongs to the MG439/MG440 family.

The protein resides in the cell membrane. This is an uncharacterized protein from Mycoplasma pneumoniae (strain ATCC 29342 / M129 / Subtype 1) (Mycoplasmoides pneumoniae).